A 337-amino-acid chain; its full sequence is Glyceraldehyde-3-phosphate dehydrogenase 1 (337 aa).

Residues 12 to 13 (RI), Asp-34, and Arg-79 contribute to the NAD(+) site. Residues 150–152 (SCT), Thr-181, 210–211 (TG), and Arg-233 each bind D-glyceraldehyde 3-phosphate. Catalysis depends on Cys-151, which acts as the Nucleophile. Asn-315 is an NAD(+) binding site.

It belongs to the glyceraldehyde-3-phosphate dehydrogenase family. In terms of assembly, homotetramer.

The protein resides in the cytoplasm. It catalyses the reaction D-glyceraldehyde 3-phosphate + phosphate + NAD(+) = (2R)-3-phospho-glyceroyl phosphate + NADH + H(+). It functions in the pathway carbohydrate degradation; glycolysis; pyruvate from D-glyceraldehyde 3-phosphate: step 1/5. This Mucor circinelloides f. lusitanicus (Mucor racemosus var. lusitanicus) protein is Glyceraldehyde-3-phosphate dehydrogenase 1 (GPD1).